The following is a 337-amino-acid chain: MRNITISAYTPTEFTIENISDTVAKISAWPFEIGYGITLAHPLRRLLYTSTVGYAPTAIHIDGVAHEFDSMRGMLEDVALFIINLKKLRFKIKSDSNKEIVEFSFKGSKEIYGKDLNNDQVEVVNKDAYLATINEDAELEFTLIVEKGIGYIPSEEIKEFLNDPKFIALDAFFTPVREATYDIEKVLFEDNPDYEKVVLTVTTDGQITPNEAFQNALEAMYKQLSVFDKITNVRSVIKNQATSNELENTKLLQNITDLNLSARSYNCLEKAGVVYIGELALMSVSELAGLKNLGKKSLDEIKNIMENIGFPVGTSKLSDNKEILKNKIAELKAQNEG.

Residues 1–231 (MRNITISAYT…KQLSVFDKIT (231 aa)) are alpha N-terminal domain (alpha-NTD). The interval 248–337 (NTKLLQNITD…IAELKAQNEG (90 aa)) is alpha C-terminal domain (alpha-CTD).

Belongs to the RNA polymerase alpha chain family. Homodimer. The RNAP catalytic core consists of 2 alpha, 1 beta, 1 beta' and 1 omega subunit. When a sigma factor is associated with the core the holoenzyme is formed, which can initiate transcription.

The catalysed reaction is RNA(n) + a ribonucleoside 5'-triphosphate = RNA(n+1) + diphosphate. DNA-dependent RNA polymerase catalyzes the transcription of DNA into RNA using the four ribonucleoside triphosphates as substrates. This is DNA-directed RNA polymerase subunit alpha from Campylobacter jejuni subsp. doylei (strain ATCC BAA-1458 / RM4099 / 269.97).